The chain runs to 292 residues: Zinc finger protein OZF (292 aa).

C2H2-type zinc fingers lie at residues 16–38, 44–66, 72–94, 100–122, 128–150, 156–178, 184–206, 212–234, 240–262, and 268–290; these read FACK…EHFH, FECN…QNTH, LECN…QKIH, FECK…QRTH, FICK…EKIH, FKCN…QNIH, YECN…VRIH, YECN…VRSH, YGCN…LRIH, and YQCS…QKIH. Glycyl lysine isopeptide (Lys-Gly) (interchain with G-Cter in SUMO2) cross-links involve residues Lys-28, Lys-51, and Lys-56. Residues Lys-157 and Lys-169 each participate in a glycyl lysine isopeptide (Lys-Gly) (interchain with G-Cter in SUMO) cross-link. Residue Lys-173 forms a Glycyl lysine isopeptide (Lys-Gly) (interchain with G-Cter in SUMO2) linkage. The interval 212-292 is interaction with TERF2IP; the sequence is YECNVCGKAF…HIRHQKIHTH (81 aa).

This sequence belongs to the krueppel C2H2-type zinc-finger protein family. As to quaternary structure, binds DNA. Interacts with SUMO conjugating enzyme UBC9/UBE2I. Interacts with the telomeric protein TERF2IP.

It localises to the nucleus. The sequence is that of Zinc finger protein OZF (ZNF146) from Bos taurus (Bovine).